The following is a 258-amino-acid chain: Ribosomal RNA small subunit methyltransferase J (258 aa).

Residues 123–124 (ER) and Asp-177 each bind S-adenosyl-L-methionine. Residues 232 to 258 (IDGPKPSHSLEGKSSRYDIYPKKALKA) are disordered. Residues 239–252 (HSLEGKSSRYDIYP) show a composition bias toward basic and acidic residues.

The protein belongs to the methyltransferase superfamily. RsmJ family.

It is found in the cytoplasm. It carries out the reaction guanosine(1516) in 16S rRNA + S-adenosyl-L-methionine = N(2)-methylguanosine(1516) in 16S rRNA + S-adenosyl-L-homocysteine + H(+). Its function is as follows. Specifically methylates the guanosine in position 1516 of 16S rRNA. This is Ribosomal RNA small subunit methyltransferase J from Pseudomonas putida (strain W619).